Consider the following 299-residue polypeptide: Very long chain fatty acid elongase 5 (299 aa).

Met-1 is subject to N-acetylmethionine. The next 7 helical transmembrane spans lie at Trp-26–Val-46, Ile-64–Val-84, Val-112–Leu-132, Ile-139–Met-158, Phe-168–Ser-187, Gly-205–Cys-225, and Thr-226–Phe-246. Phosphoserine is present on Ser-285.

This sequence belongs to the ELO family. ELOVL5 subfamily. As to quaternary structure, interacts with TECR.

Its subcellular location is the endoplasmic reticulum membrane. The protein localises to the cell projection. The protein resides in the dendrite. The catalysed reaction is a very-long-chain acyl-CoA + malonyl-CoA + H(+) = a very-long-chain 3-oxoacyl-CoA + CO2 + CoA. It carries out the reaction (6Z,9Z,12Z)-octadecatrienoyl-CoA + malonyl-CoA + H(+) = (8Z,11Z,14Z)-3-oxoeicosatrienoyl-CoA + CO2 + CoA. It catalyses the reaction (9Z,12Z,15Z)-octadecatrienoyl-CoA + malonyl-CoA + H(+) = (11Z,14Z,17Z)-3-oxoeicosatrienoyl-CoA + CO2 + CoA. The enzyme catalyses (9Z)-hexadecenoyl-CoA + malonyl-CoA + H(+) = 3-oxo-(11Z)-octadecenoyl-CoA + CO2 + CoA. The catalysed reaction is (9Z)-octadecenoyl-CoA + malonyl-CoA + H(+) = 3-oxo-(11Z)-eicosenoyl-CoA + CO2 + CoA. It carries out the reaction (11Z)-octadecenoyl-CoA + malonyl-CoA + H(+) = 3-oxo-(13Z)-eicosenoyl-CoA + CO2 + CoA. It catalyses the reaction (9Z,12Z)-octadecadienoyl-CoA + malonyl-CoA + H(+) = (11Z,14Z)-3-oxoicosa-11,14-dienoyl-CoA + CO2 + CoA. The enzyme catalyses (6Z,9Z,12Z,15Z)-octadecatetraenoyl-CoA + malonyl-CoA + H(+) = (8Z,11Z,14Z,17Z)-3-oxoicosatetraenoyl-CoA + CO2 + CoA. The catalysed reaction is (5Z,8Z,11Z,14Z)-eicosatetraenoyl-CoA + malonyl-CoA + H(+) = (7Z,10Z,13Z,16Z)-3-oxodocosatetraenoyl-CoA + CO2 + CoA. It carries out the reaction (5Z,8Z,11Z,14Z,17Z)-eicosapentaenoyl-CoA + malonyl-CoA + H(+) = 3-oxo-(7Z,10Z,13Z,16Z,19Z)-docosapentaenoyl-CoA + CO2 + CoA. It functions in the pathway lipid metabolism; polyunsaturated fatty acid biosynthesis. Its function is as follows. Catalyzes the first and rate-limiting reaction of the four reactions that constitute the long-chain fatty acids elongation cycle. This endoplasmic reticulum-bound enzymatic process allows the addition of 2 carbons to the chain of long- and very long-chain fatty acids (VLCFAs) per cycle. Condensing enzyme that acts specifically toward polyunsaturated acyl-CoA with the higher activity toward C18:3(n-6) acyl-CoA. May participate in the production of monounsaturated and of polyunsaturated VLCFAs of different chain lengths that are involved in multiple biological processes as precursors of membrane lipids and lipid mediators. In conditions where the essential linoleic and alpha linoleic fatty acids are lacking it is also involved in the synthesis of Mead acid from oleic acid. The chain is Very long chain fatty acid elongase 5 from Bos taurus (Bovine).